The following is a 422-amino-acid chain: Glutamyl-tRNA reductase (422 aa).

Substrate contacts are provided by residues 49–52 (TCNR), S110, 115–117 (EPQ), and Q121. C50 (nucleophile) is an active-site residue. 190 to 195 (GAGETI) is an NADP(+) binding site.

It belongs to the glutamyl-tRNA reductase family. In terms of assembly, homodimer.

It catalyses the reaction (S)-4-amino-5-oxopentanoate + tRNA(Glu) + NADP(+) = L-glutamyl-tRNA(Glu) + NADPH + H(+). It participates in porphyrin-containing compound metabolism; protoporphyrin-IX biosynthesis; 5-aminolevulinate from L-glutamyl-tRNA(Glu): step 1/2. Its function is as follows. Catalyzes the NADPH-dependent reduction of glutamyl-tRNA(Glu) to glutamate 1-semialdehyde (GSA). The protein is Glutamyl-tRNA reductase of Colwellia psychrerythraea (strain 34H / ATCC BAA-681) (Vibrio psychroerythus).